We begin with the raw amino-acid sequence, 1114 residues long: Kinesin-like protein KIN-12F (1114 aa).

The interval methionine 1–arginine 84 is disordered. Polar residues-rich tracts occupy residues leucine 10–aspartate 39 and proline 48–alanine 80. The region spanning histidine 104–methionine 436 is the Kinesin motor domain. Glycine 175–threonine 182 provides a ligand contact to ATP. Coiled coils occupy residues glutamine 761–aspartate 791, alanine 872–alanine 942, and glutamate 1038–glutamate 1081. Residues asparagine 1092 to methionine 1114 form a disordered region.

This sequence belongs to the TRAFAC class myosin-kinesin ATPase superfamily. Kinesin family. KIN-12 subfamily.

The sequence is that of Kinesin-like protein KIN-12F from Arabidopsis thaliana (Mouse-ear cress).